Reading from the N-terminus, the 211-residue chain is Lysozyme g (211 aa).

The signal sequence occupies residues 1–26 (MLGKNDPMCLVLVLLGLTALLGICQG). 2 disulfides stabilise this stretch: Cys30-Cys86 and Cys44-Cys55. Catalysis depends on residues Glu99 and Asp112.

Belongs to the glycosyl hydrolase 23 family. As to expression, granulocyte compartment of myelomonocytic cells.

Its subcellular location is the secreted. It carries out the reaction Hydrolysis of (1-&gt;4)-beta-linkages between N-acetylmuramic acid and N-acetyl-D-glucosamine residues in a peptidoglycan and between N-acetyl-D-glucosamine residues in chitodextrins.. This Gallus gallus (Chicken) protein is Lysozyme g.